Reading from the N-terminus, the 380-residue chain is Anthranilate phosphoribosyltransferase (380 aa).

Positions 109, 119, 121, 122, 142, 144, and 146 each coordinate 5-phospho-alpha-D-ribose 1-diphosphate. D258 and E259 together coordinate Mg(2+).

This sequence belongs to the anthranilate phosphoribosyltransferase family. In terms of assembly, homodimer. Mg(2+) is required as a cofactor.

The catalysed reaction is N-(5-phospho-beta-D-ribosyl)anthranilate + diphosphate = 5-phospho-alpha-D-ribose 1-diphosphate + anthranilate. It participates in amino-acid biosynthesis; L-tryptophan biosynthesis; L-tryptophan from chorismate: step 2/5. Functionally, catalyzes the transfer of the phosphoribosyl group of 5-phosphorylribose-1-pyrophosphate (PRPP) to anthranilate to yield N-(5'-phosphoribosyl)-anthranilate (PRA), the second step in tryptophan biosynthesis. The chain is Anthranilate phosphoribosyltransferase from Saccharomyces cerevisiae (strain ATCC 204508 / S288c) (Baker's yeast).